Reading from the N-terminus, the 110-residue chain is Minor capsid protein VP2 (110 aa).

Belongs to the vesivirus VP2 protein family. In terms of assembly, homooligomer. The portal-like structure consists in 12 copies of VP2. Interacts with capsid protein VP1.

The protein localises to the virion. It localises to the host cytoplasm. Its function is as follows. Minor structural protein that forms a portal-like structure at a unique three-fold axis of symmetry, following binding to the host receptor. The channel formed by VP2 may allow the delivery of the viral genome through the host endosomal membrane. The protein is Minor capsid protein VP2 of Otariidae (fur seals &amp; sea lions).